Here is a 206-residue protein sequence, read N- to C-terminus: Large ribosomal subunit protein eL13y (206 aa).

Residues 182–206 (LERTNKRHAGARAKRAADAEKEEKK) form a disordered region. A compositionally biased stretch (basic residues) spans 186–195 (NKRHAGARAK). The segment covering 196-206 (RAADAEKEEKK) has biased composition (basic and acidic residues).

It belongs to the eukaryotic ribosomal protein eL13 family.

This Brassica napus (Rape) protein is Large ribosomal subunit protein eL13y.